The following is an 865-amino-acid chain: cGMP-specific 3',5'-cyclic phosphodiesterase (865 aa).

Low complexity predominate over residues 69–83 (CSCSSQQSSRADSSA). The interval 69 to 92 (CSCSSQQSSRADSSAPGTPTRKIS) is disordered. Serine 92 carries the post-translational modification Phosphoserine. GAF domains lie at 154 to 304 (DVTA…GIVL) and 336 to 493 (SLEV…GLGI). One can recognise a PDEase domain in the interval 526 to 850 (ETKELQSLAA…QKWQALAEQQ (325 aa)). The Proton donor role is filled by histidine 603. Zn(2+) contacts are provided by histidine 607, histidine 643, aspartate 644, and aspartate 754. A Mg(2+)-binding site is contributed by aspartate 644. Glutamine 807 provides a ligand contact to 3',5'-cyclic GMP.

It belongs to the cyclic nucleotide phosphodiesterase family. The cofactor is Zn(2+). It depends on Mg(2+) as a cofactor. Post-translationally, phosphorylation is regulated by binding of cGMP to the two allosteric sites. Phosphorylation by PRKG1 leads to its activation. In terms of tissue distribution, isoform PDE5A1 and isoform PDE5A2 are highly expressed in the cerebellum, hippocampus, retina, lung, heart, spleen, and thoracic artery. Isoform PDE5A1, but not isoform PDE5A2, is also abundantly expressed in the pylorus.

The protein resides in the cytoplasm. It is found in the cytosol. The catalysed reaction is 3',5'-cyclic GMP + H2O = GMP + H(+). It functions in the pathway purine metabolism; 3',5'-cyclic GMP degradation; GMP from 3',5'-cyclic GMP: step 1/1. Inhibited by zaprinast. Its function is as follows. Plays a role in signal transduction by regulating the intracellular concentration of cyclic nucleotides. This phosphodiesterase catalyzes the specific hydrolysis of cGMP to 5'-GMP. Specifically regulates nitric-oxide-generated cGMP. The polypeptide is cGMP-specific 3',5'-cyclic phosphodiesterase (PDE5A) (Canis lupus familiaris (Dog)).